The following is a 297-amino-acid chain: 33 kDa chaperonin (297 aa).

Intrachain disulfides connect cysteine 232/cysteine 234 and cysteine 266/cysteine 269.

This sequence belongs to the HSP33 family. Post-translationally, under oxidizing conditions two disulfide bonds are formed involving the reactive cysteines. Under reducing conditions zinc is bound to the reactive cysteines and the protein is inactive.

It localises to the cytoplasm. Its function is as follows. Redox regulated molecular chaperone. Protects both thermally unfolding and oxidatively damaged proteins from irreversible aggregation. Plays an important role in the bacterial defense system toward oxidative stress. The sequence is that of 33 kDa chaperonin from Pseudomonas paraeruginosa (strain DSM 24068 / PA7) (Pseudomonas aeruginosa (strain PA7)).